We begin with the raw amino-acid sequence, 277 residues long: NH(3)-dependent NAD(+) synthetase (277 aa).

46 to 53 (GISGGQDS) lines the ATP pocket. Residue aspartate 52 coordinates Mg(2+). Arginine 142 serves as a coordination point for deamido-NAD(+). Threonine 162 contributes to the ATP binding site. Glutamate 167 is a binding site for Mg(2+). Deamido-NAD(+)-binding residues include lysine 175 and aspartate 182. ATP is bound by residues lysine 191 and threonine 213. 263-264 (HK) is a deamido-NAD(+) binding site.

Belongs to the NAD synthetase family. In terms of assembly, homodimer.

It catalyses the reaction deamido-NAD(+) + NH4(+) + ATP = AMP + diphosphate + NAD(+) + H(+). Its pathway is cofactor biosynthesis; NAD(+) biosynthesis; NAD(+) from deamido-NAD(+) (ammonia route): step 1/1. Catalyzes the ATP-dependent amidation of deamido-NAD to form NAD. Uses ammonia as a nitrogen source. This is NH(3)-dependent NAD(+) synthetase from Corynebacterium glutamicum (strain R).